We begin with the raw amino-acid sequence, 907 residues long: Epidermal growth factor receptor substrate 15-like 1 (907 aa).

An N-acetylalanine modification is found at alanine 2. The 90-residue stretch at glycine 15 to histidine 104 folds into the EH 1 domain. The tract at residues glycine 15–aspartate 368 is interaction with DAB2. The EF-hand 1 domain occupies leucine 48–alanine 83. Position 74 is a phosphotyrosine (tyrosine 74). Residues serine 107 and serine 108 each carry the phosphoserine modification. Positions glutamate 127 to lysine 215 constitute an EH 2 domain. Residues leucine 159–alanine 194 enclose the EF-hand 2 domain. Aspartate 172, aspartate 174, aspartate 176, histidine 178, and glutamate 183 together coordinate Ca(2+). Phosphoserine occurs at positions 229, 244, 253, 255, and 259. Residues serine 229 to valine 260 form a disordered region. The segment covering serine 241–serine 255 has biased composition (low complexity). 2 consecutive EF-hand domains span residues alanine 272 to threonine 307 and glutamine 308 to lysine 341. An EH 3 domain is found at aspartate 273 to glycine 363. Serine 360 is modified (phosphoserine). Threonine 364 is modified (phosphothreonine). Phosphoserine is present on residues serine 369 and serine 375. The stretch at leucine 384–serine 551 forms a coiled coil. A Phosphoserine modification is found at serine 558. Tyrosine 562 carries the phosphotyrosine modification. Residue serine 610 is modified to Phosphoserine. The interval glutamine 611–serine 860 is disordered. The span at aspartate 622–lysine 636 shows a compositional bias: basic and acidic residues. Polar residues predominate over residues aspartate 643–alanine 652. Serine 664, serine 670, serine 695, serine 715, and serine 732 each carry phosphoserine. A compositionally biased stretch (polar residues) spans asparagine 682–leucine 696. A compositionally biased stretch (low complexity) spans phenylalanine 703 to serine 743. The segment covering alanine 776–proline 790 has biased composition (pro residues). The residue at position 791 (serine 791) is a Phosphoserine. Polar residues predominate over residues serine 791–serine 802. Residue threonine 795 is modified to Phosphothreonine. Over residues alanine 840–serine 853 the composition is skewed to low complexity. UIM domains are found at residues asparagine 863–arginine 882 and glutamine 889–alanine 907.

Interacts with EPS15, AGFG1/HRB and AGFG2/HRBL. Associates with the clathrin-associated adapter protein complex 2 (AP-2). Interacts with FCHO1. Interacts with FCHO2. Interacts (via EH domains) with DAB2. Interacts with UBQLN1 (via ubiquitin-like domain). Interacts with CAVIN3 (via leucine-zipper domain). Interacts with REPS2. In terms of processing, phosphorylated on tyrosine residues by EGFR.

The protein localises to the cell membrane. It is found in the nucleus. Its subcellular location is the membrane. The protein resides in the coated pit. Its function is as follows. Seems to be a constitutive component of clathrin-coated pits that is required for receptor-mediated endocytosis. Involved in endocytosis of integrin beta-1 (ITGB1) and transferrin receptor (TFR); internalization of ITGB1 as DAB2-dependent cargo but not TFR seems to require association with DAB2. The sequence is that of Epidermal growth factor receptor substrate 15-like 1 (Eps15l1) from Mus musculus (Mouse).